The primary structure comprises 484 residues: Tyramine receptor 1 (484 aa).

The Extracellular portion of the chain corresponds to 1–54; the sequence is MVRVELQAASLMNGSSAAEEPQDALVGGDACGGRRPPSVLGVRLAVPEWEVAVT. N-linked (GlcNAc...) asparagine glycosylation occurs at Asn13. The helical transmembrane segment at 55–77 threads the bilayer; that stretch reads AVSLSLIILITIVGNVLVVLSVF. Residues 78–87 are Cytoplasmic-facing; sequence TYKPLRIVQN. A helical membrane pass occupies residues 88–109; that stretch reads FFIVSLAVADLTVAVLVMPFNV. Topologically, residues 110-126 are extracellular; that stretch reads AYSLIQRWVFGIVVCKM. A disulfide bond links Cys124 and Cys203. Residues 127–147 traverse the membrane as a helical segment; that stretch reads WLTCDVLCCTASILNLCAIAL. The Cytoplasmic portion of the chain corresponds to 148–167; that stretch reads DRYWAITDPINYAQKRTLRR. Residues 168–190 form a helical membrane-spanning segment; the sequence is VLAMIAGVWLLSGVISSPPLIGW. Over 191 to 215 the chain is Extracellular; sequence NDWPMEFNDTTPCQLTEEQGYVIYS. Residue Asn198 is glycosylated (N-linked (GlcNAc...) asparagine). Residues 216–237 traverse the membrane as a helical segment; that stretch reads SLGSFFIPLFIMTIVYVEIFIA. Residues 238 to 411 are Cytoplasmic-facing; it reads TKRRLRERAK…LSKERRAART (174 aa). Over residues 253–280 the composition is skewed to polar residues; it reads SAMKQQMAAQAVPSSVPSHDQESVSSET. Disordered regions lie at residues 253–322 and 358–383; these read SAMK…PAMV and TTTA…PTPV. The span at 295–306 shows a compositional bias: basic residues; that stretch reads EKRRKTKKKSKK. Over residues 361-378 the composition is skewed to polar residues; that stretch reads AVTDSPRSRTASQKGSTA. A helical transmembrane segment spans residues 412–433; it reads LGIIMGVFVVCWLPFFLMYVIV. Residues 434–448 lie on the Extracellular side of the membrane; that stretch reads PFCNPSCKPSPKLVN. The chain crosses the membrane as a helical span at residues 449 to 470; that stretch reads FITWLGYINSALNPIIYTIFNL. The Cytoplasmic portion of the chain corresponds to 471 to 484; it reads DFRRAFKKLLHFKT.

The protein belongs to the G-protein coupled receptor 1 family. Present mainly in the central nervous system, especially in the supra- and subesophageal, thoracic and abdominal ganglia. Not found in the distal part of optic lobes.

The protein resides in the cell membrane. Functionally, G-protein coupled receptor for tyramine, a known neurotransmitter and neuromodulator and direct precursor of octopamine. The rank order of potency for agonists of this receptor is tyramine &gt; naphazoline &gt; tolazoline &gt; DL-octopamine &gt; dopamine &gt; epinephrine &gt; 5-hydroxytryptamine. For antagonists, the rank order is yohimbine &gt; chlorpromazine &gt; mianserin &gt; phentolamine &gt; metoclopramide. This chain is Tyramine receptor 1 (GCR1), found in Locusta migratoria (Migratory locust).